A 96-amino-acid chain; its full sequence is Large ribosomal subunit protein bL28 (96 aa).

The segment covering 1-22 has biased composition (polar residues); it reads MSRSCELTGKGVQSGNNVSHAN. Positions 1–24 are disordered; the sequence is MSRSCELTGKGVQSGNNVSHANNK.

The protein belongs to the bacterial ribosomal protein bL28 family.

This chain is Large ribosomal subunit protein bL28, found in Sinorhizobium medicae (strain WSM419) (Ensifer medicae).